The primary structure comprises 336 residues: MATLHAPAFELPEILNTKTNLADARIGAQVIECSDDFFAEAKRMLQFEAPIFVEDKFDDHGKWMDGWETRRKRHAGYDWCIVKLGVSGKISALDIDTTFFTGNYPASASLEACYAPNSDLTGAKWQSILENTELGPSQHHIFMVNNDAIFTHIRLNIFPDGGVARLRVYGDVHIQVTDHEQTLDLLALENGGRVIAYSDAHFGHPRNLINPGRGVNMGDGWETKRRRAPGYDWCILALGKSGKIEKIEIDTAHFKGNFPAEVSIQAVYLENATDAQLIPQSMFWSYLLEAQPMQMDHIHEYMNEILQHEKVSHIRINMIPDGGISRVRLWGKIAKS.

It belongs to the allantoicase family.

It carries out the reaction allantoate + H2O = (S)-ureidoglycolate + urea. The protein operates within nitrogen metabolism; (S)-allantoin degradation; (S)-ureidoglycolate from allantoate (aminidohydrolase route): step 1/1. The protein is Probable allantoicase of Acinetobacter baumannii (strain SDF).